The primary structure comprises 348 residues: Ion-translocating oxidoreductase complex subunit D (348 aa).

3 consecutive transmembrane segments (helical) span residues isoleucine 25–isoleucine 45, proline 68–alanine 88, and alanine 124–alanine 144. Threonine 182 carries the FMN phosphoryl threonine modification. A run of 5 helical transmembrane segments spans residues threonine 211–alanine 231, tryptophan 237–alanine 257, alanine 263–threonine 283, leucine 296–proline 316, and aspartate 317–isoleucine 337.

This sequence belongs to the NqrB/RnfD family. The complex is composed of six subunits: RnfA, RnfB, RnfC, RnfD, RnfE and RnfG. FMN serves as cofactor.

It localises to the cell inner membrane. In terms of biological role, part of a membrane-bound complex that couples electron transfer with translocation of ions across the membrane. This chain is Ion-translocating oxidoreductase complex subunit D, found in Shewanella amazonensis (strain ATCC BAA-1098 / SB2B).